Reading from the N-terminus, the 105-residue chain is Large ribosomal subunit protein uL24 (105 aa).

The protein belongs to the universal ribosomal protein uL24 family. In terms of assembly, part of the 50S ribosomal subunit.

In terms of biological role, one of two assembly initiator proteins, it binds directly to the 5'-end of the 23S rRNA, where it nucleates assembly of the 50S subunit. Functionally, one of the proteins that surrounds the polypeptide exit tunnel on the outside of the subunit. This is Large ribosomal subunit protein uL24 from Francisella tularensis subsp. novicida (strain U112).